A 196-amino-acid chain; its full sequence is Holliday junction branch migration complex subunit RuvA (196 aa).

The tract at residues 1-63 is domain I; sequence MINKICGKIV…EDEIRLFGFL (63 aa). Positions 64 to 135 are domain II; the sequence is NVSEREVFEK…KLRGKLVKVN (72 aa). A flexible linker region spans residues 135–138; that stretch reads NEAS. Residues 139–196 form a domain III region; the sequence is SGVLKFKELEQSIVNMGFDRKLVAAAIKEIMLIDEFLMLRQVDQEQFLFREILRKLSG.

This sequence belongs to the RuvA family. In terms of assembly, homotetramer. Forms an RuvA(8)-RuvB(12)-Holliday junction (HJ) complex. HJ DNA is sandwiched between 2 RuvA tetramers; dsDNA enters through RuvA and exits via RuvB. An RuvB hexamer assembles on each DNA strand where it exits the tetramer. Each RuvB hexamer is contacted by two RuvA subunits (via domain III) on 2 adjacent RuvB subunits; this complex drives branch migration. In the full resolvosome a probable DNA-RuvA(4)-RuvB(12)-RuvC(2) complex forms which resolves the HJ.

The protein resides in the cytoplasm. Its function is as follows. The RuvA-RuvB-RuvC complex processes Holliday junction (HJ) DNA during genetic recombination and DNA repair, while the RuvA-RuvB complex plays an important role in the rescue of blocked DNA replication forks via replication fork reversal (RFR). RuvA specifically binds to HJ cruciform DNA, conferring on it an open structure. The RuvB hexamer acts as an ATP-dependent pump, pulling dsDNA into and through the RuvAB complex. HJ branch migration allows RuvC to scan DNA until it finds its consensus sequence, where it cleaves and resolves the cruciform DNA. This Borrelia turicatae (strain 91E135) protein is Holliday junction branch migration complex subunit RuvA.